The sequence spans 172 residues: MKSTILVTGYKNFELGIFQDKDPRITIIKKAIDKDFRRFLENGADWFIFMGNLGFEYWALEVALDLQKEYDFQIATIFTFENHGQNWNEANKAKLALFKQVDFVKYTFPSYENPGQFKQYNHFLINNTQGAYLFYDSENETNLKFLLEMMEKKEAYDISFLTFDRLNEIYEE.

It belongs to the UPF0398 family.

This is UPF0398 protein gbs0290 from Streptococcus agalactiae serotype III (strain NEM316).